Here is a 915-residue protein sequence, read N- to C-terminus: Phototropin-2 (915 aa).

Residues 1-10 (MERPRAPPSP) are compositionally biased toward pro residues. Disordered regions lie at residues 1-62 (MERP…EFQD) and 84-118 (DDGI…GAFP). Phosphoserine occurs at positions 9 and 22. Residues 27–43 (NPSSGKETHGSTSSSSK) are compositionally biased toward polar residues. Residues 93 to 107 (SEVERSKNMSRRSSE) are compositionally biased toward basic and acidic residues. One can recognise a PAS 1 domain in the interval 120 to 193 (VSQELKTALS…AKIRDCVKNG (74 aa)). Position 121 is a phosphoserine (Ser121). Asn169 contributes to the FMN binding site. At Cys170 the chain carries S-4a-FMN cysteine. Arg171, Gln174, Arg187, Asn202, Asn212, Gln233, and Lys238 together coordinate FMN. Residues 194–248 (KSYCGRLLNYKKDGTPFWNLLTVTPIKDDQGNTIKFIGMQVEVSKYTEGVNDKAL) enclose the PAC 1 domain. Residues 281 to 344 (HRKSQVQESV…KSSNNRHEDL (64 aa)) form a disordered region. Polar residues-rich tracts occupy residues 286 to 310 (VQES…GRQT) and 325 to 337 (RVST…LKSS). The residue at position 364 (Ser364) is a Phosphoserine. The PAS 2 domain occupies 376 to 449 (QGIDLATTLE…QKIRDAIRDQ (74 aa)). An FMN-binding site is contributed by Asn425. Cys426 bears the S-4a-FMN cysteine mark. FMN-binding residues include Arg427, Gln430, Arg443, Asn458, Asn468, Phe470, and Gln489. Positions 450–504 (REITVQLINYTKSGKKFWNLFHLQPMRDQKGELQYFIGVQLDGSDHVEPLQNRLS) constitute a PAC 2 domain. Positions 577-864 (FKPIKPLGSG…ANEIKQHAFF (288 aa)) constitute a Protein kinase domain. Residues 583–591 (LGSGDTGSV) and Lys606 each bind ATP. The active-site Proton acceptor is Asp702. The tract at residues 720–774 (DFDLSFMTTCTPQLIIPAAPSKRRRSKSQPLPTFVAEPSTQSNSFVGTEEYIAPE) is activation loop.

Belongs to the protein kinase superfamily. AGC Ser/Thr protein kinase family. In terms of assembly, homodimer. Interacts with PKS1, PKS2, RPT3 and PHOT1. Associates with CBC1 and CBC2. Binds to BHP. The cofactor is FMN. Autophosphorylated in response to blue light irradiation. Post-translationally, 2 molecules of FMN bind covalently to cysteines after exposure to blue light and are reversed in the dark. Expressed in leaves, stems and flowers, and to a lower extent in roots. Present in guard cells (at protein level).

The protein localises to the cell membrane. The enzyme catalyses L-seryl-[protein] + ATP = O-phospho-L-seryl-[protein] + ADP + H(+). The catalysed reaction is L-threonyl-[protein] + ATP = O-phospho-L-threonyl-[protein] + ADP + H(+). Its activity is regulated as follows. Autophosphorylation is inhibited by staurosporine, but not by tyrphostin 9, sphingosine, GW5074 and BML-265. Protein kinase that acts as a blue light photoreceptor in a signal-transduction pathway for photo-induced movements. Triggers the phosphorylation of AHA1 and AHA2 C-terminal penultimate Thr in guard cells to activate them and induce stomatal opening in response to blue light (BL). Also phosphorylates BLUS1, a kinase involved in stomatal opening. Mediates calcium spiking of extra- and intracellular origins in response to blue light. Involved in hypocotyl phototropism. Contributes to the chloroplast accumulation in low blue light and mediates their translocation (avoidance response) at high fluence. Regulates stomata opening and photomorphogenesis response of leaf tissue. Not involved in hypocotyl elongation inhibition, anthocyanin accumulation or cotyledon opening. The chain is Phototropin-2 from Arabidopsis thaliana (Mouse-ear cress).